Reading from the N-terminus, the 397-residue chain is Argininosuccinate synthase (397 aa).

Position 9-17 (9-17 (AYSGGLDTS)) interacts with ATP. Y87 contributes to the L-citrulline binding site. Position 117 (G117) interacts with ATP. L-aspartate contacts are provided by T119, N123, and D124. Residue N123 coordinates L-citrulline. Residues R127, S175, S184, E257, and Y269 each coordinate L-citrulline.

The protein belongs to the argininosuccinate synthase family. Type 1 subfamily. Homotetramer.

The protein resides in the cytoplasm. The enzyme catalyses L-citrulline + L-aspartate + ATP = 2-(N(omega)-L-arginino)succinate + AMP + diphosphate + H(+). It functions in the pathway amino-acid biosynthesis; L-arginine biosynthesis; L-arginine from L-ornithine and carbamoyl phosphate: step 2/3. This Dictyoglomus thermophilum (strain ATCC 35947 / DSM 3960 / H-6-12) protein is Argininosuccinate synthase.